The primary structure comprises 295 residues: Acetyl-coenzyme A carboxylase carboxyl transferase subunit beta (295 aa).

Residues methionine 1–lysine 20 form a disordered region. In terms of domain architecture, CoA carboxyltransferase N-terminal spans leucine 28–alanine 295. Zn(2+) contacts are provided by cysteine 32, cysteine 35, cysteine 51, and cysteine 54. Residues cysteine 32–cysteine 54 form a C4-type zinc finger.

Belongs to the AccD/PCCB family. In terms of assembly, acetyl-CoA carboxylase is a heterohexamer composed of biotin carboxyl carrier protein (AccB), biotin carboxylase (AccC) and two subunits each of ACCase subunit alpha (AccA) and ACCase subunit beta (AccD). The cofactor is Zn(2+).

It localises to the cytoplasm. It catalyses the reaction N(6)-carboxybiotinyl-L-lysyl-[protein] + acetyl-CoA = N(6)-biotinyl-L-lysyl-[protein] + malonyl-CoA. The protein operates within lipid metabolism; malonyl-CoA biosynthesis; malonyl-CoA from acetyl-CoA: step 1/1. Functionally, component of the acetyl coenzyme A carboxylase (ACC) complex. Biotin carboxylase (BC) catalyzes the carboxylation of biotin on its carrier protein (BCCP) and then the CO(2) group is transferred by the transcarboxylase to acetyl-CoA to form malonyl-CoA. In Xanthomonas campestris pv. campestris (strain 8004), this protein is Acetyl-coenzyme A carboxylase carboxyl transferase subunit beta.